The chain runs to 241 residues: Ribonuclease PH (241 aa).

Residues Arg-86 and 124 to 126 contribute to the phosphate site; that span reads GTR.

This sequence belongs to the RNase PH family. Homohexameric ring arranged as a trimer of dimers.

It catalyses the reaction tRNA(n+1) + phosphate = tRNA(n) + a ribonucleoside 5'-diphosphate. In terms of biological role, phosphorolytic 3'-5' exoribonuclease that plays an important role in tRNA 3'-end maturation. Removes nucleotide residues following the 3'-CCA terminus of tRNAs; can also add nucleotides to the ends of RNA molecules by using nucleoside diphosphates as substrates, but this may not be physiologically important. Probably plays a role in initiation of 16S rRNA degradation (leading to ribosome degradation) during starvation. This Hamiltonella defensa subsp. Acyrthosiphon pisum (strain 5AT) protein is Ribonuclease PH.